The chain runs to 290 residues: GTPase Era (290 aa).

An Era-type G domain is found at 2–169 (KSGFAAILGR…KNKIYENFSE (168 aa)). The interval 10–17 (GRPSTGKS) is G1. 10-17 (GRPSTGKS) contacts GTP. Residues 36–40 (QTTRN) are G2. Residues 57–60 (DTPG) are G3. GTP is bound by residues 57–61 (DTPGF) and 119–122 (NKVD). Residues 119–122 (NKVD) are G4. Residues 148 to 150 (ISA) are G5. Residues 200–276 (LKEELPYSLY…NLFLQVKLKK (77 aa)) form the KH type-2 domain.

Belongs to the TRAFAC class TrmE-Era-EngA-EngB-Septin-like GTPase superfamily. Era GTPase family. Monomer.

Its subcellular location is the cytoplasm. The protein resides in the cell inner membrane. In terms of biological role, an essential GTPase that binds both GDP and GTP, with rapid nucleotide exchange. Plays a role in 16S rRNA processing and 30S ribosomal subunit biogenesis and possibly also in cell cycle regulation and energy metabolism. In Borrelia garinii subsp. bavariensis (strain ATCC BAA-2496 / DSM 23469 / PBi) (Borreliella bavariensis), this protein is GTPase Era.